The chain runs to 101 residues: Small ribosomal subunit protein uS14 (101 aa).

Belongs to the universal ribosomal protein uS14 family. In terms of assembly, part of the 30S ribosomal subunit. Contacts proteins S3 and S10.

Binds 16S rRNA, required for the assembly of 30S particles and may also be responsible for determining the conformation of the 16S rRNA at the A site. In Leifsonia xyli subsp. xyli (strain CTCB07), this protein is Small ribosomal subunit protein uS14.